A 397-amino-acid chain; its full sequence is Oxysterol-binding protein homolog C354.07c (397 aa).

N-linked (GlcNAc...) asparagine glycans are attached at residues Asn-186 and Asn-195.

The protein belongs to the OSBP family.

The protein localises to the endoplasmic reticulum. The polypeptide is Oxysterol-binding protein homolog C354.07c (Schizosaccharomyces pombe (strain 972 / ATCC 24843) (Fission yeast)).